The sequence spans 242 residues: Uridylate kinase (242 aa).

11-14 (KLSG) serves as a coordination point for ATP. The involved in allosteric activation by GTP stretch occupies residues 19–24 (GEKGVG). G53 is a binding site for UMP. Residues G54 and R58 each coordinate ATP. UMP-binding positions include D73 and 134–141 (IGSPYFST). Positions 162, 168, and 171 each coordinate ATP.

The protein belongs to the UMP kinase family. Homohexamer.

It is found in the cytoplasm. It catalyses the reaction UMP + ATP = UDP + ADP. Its pathway is pyrimidine metabolism; CTP biosynthesis via de novo pathway; UDP from UMP (UMPK route): step 1/1. Its activity is regulated as follows. Allosterically activated by GTP. Inhibited by UTP. In terms of biological role, catalyzes the reversible phosphorylation of UMP to UDP. This Streptococcus pyogenes serotype M1 protein is Uridylate kinase.